Consider the following 253-residue polypeptide: Bridging integrator 3 (253 aa).

The 224-residue stretch at 9-232 (GQPKKQIVSK…LDQPGHSDEQ (224 aa)) folds into the BAR domain. 2 coiled-coil regions span residues 16–57 (VSKT…AMSK) and 120–151 (SLNM…KEKT). Residues 222 to 241 (QLDQPGHSDEQRERENETKL) are disordered. A compositionally biased stretch (basic and acidic residues) spans 227-241 (GHSDEQRERENETKL).

The protein resides in the cytoplasm. Its subcellular location is the cytoskeleton. Functionally, involved in cytokinesis and septation where it has a role in the localization of F-actin. In Mus musculus (Mouse), this protein is Bridging integrator 3 (Bin3).